The primary structure comprises 126 residues: Holo-[acyl-carrier-protein] synthase (126 aa).

Aspartate 9 and glutamate 58 together coordinate Mg(2+).

It belongs to the P-Pant transferase superfamily. AcpS family. It depends on Mg(2+) as a cofactor.

It localises to the cytoplasm. It catalyses the reaction apo-[ACP] + CoA = holo-[ACP] + adenosine 3',5'-bisphosphate + H(+). Its function is as follows. Transfers the 4'-phosphopantetheine moiety from coenzyme A to a Ser of acyl-carrier-protein. The sequence is that of Holo-[acyl-carrier-protein] synthase from Aliivibrio fischeri (strain MJ11) (Vibrio fischeri).